The primary structure comprises 363 residues: Dual-specificity RNA methyltransferase RlmN (363 aa).

The active-site Proton acceptor is the E102. The region spanning E108–A349 is the Radical SAM core domain. A disulfide bridge links C115 with C350. Residues C122, C126, and C129 each contribute to the [4Fe-4S] cluster site. Residues G174–E175, S206, S228–H230, and N307 contribute to the S-adenosyl-L-methionine site. C350 (S-methylcysteine intermediate) is an active-site residue.

This sequence belongs to the radical SAM superfamily. RlmN family. The cofactor is [4Fe-4S] cluster.

The protein localises to the cytoplasm. It catalyses the reaction adenosine(2503) in 23S rRNA + 2 reduced [2Fe-2S]-[ferredoxin] + 2 S-adenosyl-L-methionine = 2-methyladenosine(2503) in 23S rRNA + 5'-deoxyadenosine + L-methionine + 2 oxidized [2Fe-2S]-[ferredoxin] + S-adenosyl-L-homocysteine. It carries out the reaction adenosine(37) in tRNA + 2 reduced [2Fe-2S]-[ferredoxin] + 2 S-adenosyl-L-methionine = 2-methyladenosine(37) in tRNA + 5'-deoxyadenosine + L-methionine + 2 oxidized [2Fe-2S]-[ferredoxin] + S-adenosyl-L-homocysteine. Its function is as follows. Specifically methylates position 2 of adenine 2503 in 23S rRNA and position 2 of adenine 37 in tRNAs. m2A2503 modification seems to play a crucial role in the proofreading step occurring at the peptidyl transferase center and thus would serve to optimize ribosomal fidelity. This Buchnera aphidicola subsp. Schizaphis graminum (strain Sg) protein is Dual-specificity RNA methyltransferase RlmN.